A 151-amino-acid chain; its full sequence is Ribosome maturation factor RimP (151 aa).

Belongs to the RimP family.

The protein localises to the cytoplasm. Functionally, required for maturation of 30S ribosomal subunits. This chain is Ribosome maturation factor RimP, found in Haemophilus influenzae (strain 86-028NP).